We begin with the raw amino-acid sequence, 360 residues long: Methylthioribose-1-phosphate isomerase (360 aa).

Catalysis depends on aspartate 246, which acts as the Proton donor.

It belongs to the eIF-2B alpha/beta/delta subunits family. MtnA subfamily.

The protein resides in the cytoplasm. The protein localises to the nucleus. It carries out the reaction 5-(methylsulfanyl)-alpha-D-ribose 1-phosphate = 5-(methylsulfanyl)-D-ribulose 1-phosphate. The protein operates within amino-acid biosynthesis; L-methionine biosynthesis via salvage pathway; L-methionine from S-methyl-5-thio-alpha-D-ribose 1-phosphate: step 1/6. Catalyzes the interconversion of methylthioribose-1-phosphate (MTR-1-P) into methylthioribulose-1-phosphate (MTRu-1-P). In Aedes aegypti (Yellowfever mosquito), this protein is Methylthioribose-1-phosphate isomerase.